A 130-amino-acid polypeptide reads, in one-letter code: Protein NrdI (130 aa).

Belongs to the NrdI family.

Probably involved in ribonucleotide reductase function. This chain is Protein NrdI, found in Bartonella bacilliformis (strain ATCC 35685 / KC583 / Herrer 020/F12,63).